We begin with the raw amino-acid sequence, 322 residues long: Ribokinase (322 aa).

Substrate contacts are provided by residues 25–27, 53–57, and Glu154; these read MTD and GKGAN. Residues Asn199, 235 to 240, and Thr256 contribute to the ATP site; that span reads TLGAEG. K(+) is bound by residues Asp263 and Thr265. ATP contacts are provided by residues 268–269 and Asn295; that span reads GD. Asp269 provides a ligand contact to substrate. The Proton acceptor role is filled by Asp269. 4 residues coordinate K(+): Ser301, Ala304, Gly306, and Ser310.

This sequence belongs to the carbohydrate kinase PfkB family. Ribokinase subfamily. As to quaternary structure, homodimer. The cofactor is Mg(2+).

Its subcellular location is the cytoplasm. It is found in the nucleus. It catalyses the reaction D-ribose + ATP = D-ribose 5-phosphate + ADP + H(+). Its pathway is carbohydrate metabolism; D-ribose degradation; D-ribose 5-phosphate from beta-D-ribopyranose: step 2/2. Its activity is regulated as follows. Activated by a monovalent cation that binds near, but not in, the active site. The most likely occupant of the site in vivo is potassium. Ion binding induces a conformational change that may alter substrate affinity. Competitively inhibited by phosphonoacetic acid, etidronate, 2-carboxethylphosphonic acid, N-(phosphonomethyl)glycine, N-(phosphonomethyl)iminodiacetic acid and clodronate. Its function is as follows. Catalyzes the phosphorylation of ribose at O-5 in a reaction requiring ATP and magnesium. The resulting D-ribose-5-phosphate can then be used either for sythesis of nucleotides, histidine, and tryptophan, or as a component of the pentose phosphate pathway. This is Ribokinase from Homo sapiens (Human).